The following is a 223-amino-acid chain: Mediator of RNA polymerase II transcription subunit 8 (223 aa).

The interaction with TBP1 stretch occupies residues 2–138; sequence SQSTASLVPE…VRETSGVTTA (137 aa). Residues 33–59 adopt a coiled-coil conformation; the sequence is LDAVRMRLAQLTHSLRRIRDEMSKAEL.

This sequence belongs to the Mediator complex subunit 8 family. Component of the Mediator complex, which is composed of at least 21 subunits that form three structurally distinct submodules. The Mediator head module contains MED6, MED8, MED11, SRB4/MED17, SRB5/MED18, ROX3/MED19, SRB2/MED20 and SRB6/MED22, the middle module contains MED1, MED4, NUT1/MED5, MED7, CSE2/MED9, NUT2/MED10, SRB7/MED21 and SOH1/MED31, and the tail module contains MED2, PGD1/MED3, RGR1/MED14, GAL11/MED15 and SIN4/MED16. The head and the middle modules interact directly with RNA polymerase II, whereas the elongated tail module interacts with gene-specific regulatory proteins. MED8 interacts directly with SRB5/MED18. Also interacts with Hexokinase B (HXK2). Interacts with TBP1.

Its subcellular location is the nucleus. Functionally, component of the Mediator complex, a coactivator involved in the regulated transcription of nearly all RNA polymerase II-dependent genes. Mediator functions as a bridge to convey information from gene-specific regulatory proteins to the basal RNA polymerase II transcription machinery. The Mediator complex, having a compact conformation in its free form, is recruited to promoters by direct interactions with regulatory proteins and serves for the assembly of a functional preinitiation complex with RNA polymerase II and the general transcription factors. The Mediator complex unfolds to an extended conformation and partially surrounds RNA polymerase II, specifically interacting with the unphosphorylated form of the C-terminal domain (CTD) of RNA polymerase II. The Mediator complex dissociates from the RNA polymerase II holoenzyme and stays at the promoter when transcriptional elongation begins. MED8 binds to the consensus sequence 5'-[AC][AG]GAAAT-3' in both the UAS of SUC2 and the DRS2 of HXK2. This chain is Mediator of RNA polymerase II transcription subunit 8 (MED8), found in Saccharomyces cerevisiae (strain ATCC 204508 / S288c) (Baker's yeast).